The primary structure comprises 381 residues: L-lactate dehydrogenase (381 aa).

In terms of domain architecture, FMN hydroxy acid dehydrogenase spans 1-380 (MIISSASDYR…KPEALVDLSK (380 aa)). Tyr-24 is a substrate binding site. FMN contacts are provided by Ser-106 and Gln-127. Residue Tyr-129 coordinates substrate. Thr-155 is an FMN binding site. Residue Arg-164 participates in substrate binding. Lys-251 is an FMN binding site. His-275 (proton acceptor) is an active-site residue. Arg-278 serves as a coordination point for substrate. An FMN-binding site is contributed by 306-330 (DSGIRNGLDIVRMLALGADATMLGR).

This sequence belongs to the FMN-dependent alpha-hydroxy acid dehydrogenase family. FMN serves as cofactor.

The protein localises to the cell inner membrane. It catalyses the reaction (S)-lactate + A = pyruvate + AH2. In terms of biological role, catalyzes the conversion of L-lactate to pyruvate. Is coupled to the respiratory chain. This Haemophilus influenzae (strain ATCC 51907 / DSM 11121 / KW20 / Rd) protein is L-lactate dehydrogenase.